A 172-amino-acid polypeptide reads, in one-letter code: Pre-intermoult gene 1 protein (172 aa).

The first 22 residues, 1-22, serve as a signal peptide directing secretion; the sequence is MKLTKLWLLFVCLGLFVTLVVS. The span at 25–45 shows a compositional bias: acidic residues; it reads TDSDADSDSSADSDSSADSDE. The segment at 25 to 172 is disordered; sequence TDSDADSDSS…RRNNNSRRRG (148 aa). Tandem repeats lie at residues 27–32, 33–38, and 39–44. The segment at 27–44 is 3 X 6 AA tandem repeats of S-S-A-D-S-D; sequence SDADSDSSADSDSSADSD. Over residues 55–77 the composition is skewed to low complexity; it reads TSTTESSATNSSGSSDDASGSSS. Residues 78 to 95 are compositionally biased toward acidic residues; it reads DVDDGSDDDTDSGSDTDY. Basic residues predominate over residues 104–172; that stretch reads VKKRANRKKA…RRNNNSRRRG (69 aa).

Low expression in first to third instar larvae salivary glands.

This is Pre-intermoult gene 1 protein (Pig1) from Drosophila melanogaster (Fruit fly).